The sequence spans 101 residues: Unclassified hydrophobin dewD (101 aa).

The first 21 residues, 1 to 21 (MHLSTSAAAILALSLAGPTMA), serve as a signal peptide directing secretion. 4 cysteine pairs are disulfide-bonded: cysteine 27/cysteine 81, cysteine 41/cysteine 73, cysteine 42/cysteine 60, and cysteine 82/cysteine 91.

Self-assembles to form functional amyloid fibrils called rodlets. Self-assembly into fibrillar rodlets occurs spontaneously at hydrophobic:hydrophilic interfaces and the rodlets further associate laterally to form amphipathic monolayers.

It localises to the secreted. Its subcellular location is the spore wall. Its function is as follows. Aerial growth, conidiation, and dispersal of filamentous fungi in the environment rely upon a capability of their secreting small amphipathic proteins called hydrophobins (HPBs) with low sequence identity. Class I can self-assemble into an outermost layer of rodlet bundles on aerial cell surfaces, conferring cellular hydrophobicity that supports fungal growth, development and dispersal; whereas Class II form highly ordered films at water-air interfaces through intermolecular interactions but contribute nothing to the rodlet structure. DewD is an unclassified hydrophobin that contributes to the hydrophobicity of the spore surface. In Emericella nidulans (strain FGSC A4 / ATCC 38163 / CBS 112.46 / NRRL 194 / M139) (Aspergillus nidulans), this protein is Unclassified hydrophobin dewD.